The sequence spans 1157 residues: uncharacterized protein (1157 aa).

A compositionally biased stretch (basic and acidic residues) spans 1 to 10 (MDPHWKRHDS). Disordered regions lie at residues 1 to 35 (MDPHWKRHDSSNIPTQPSPSASPKSNKPSSAQRFG), 159 to 233 (QTTP…SVEP), and 478 to 498 (KNQSSHRRNSSTSSGETGKGP). 2 stretches are compositionally biased toward low complexity: residues 18 to 31 (SPSASPKSNKPSSA) and 181 to 197 (SAGTDPFSPVSPSNPNF). A compositionally biased stretch (polar residues) spans 208 to 228 (QEWQQSPLESPLSMHSLQESL). The CSD2 domain occupies 501–574 (VWFKPSDKRI…KVEYKAILHD (74 aa)). One can recognise an RNB domain in the interval 608 to 921 (LRDKLTFMIG…ICVQRQLREA (314 aa)). A DIS3L2 C-terminal domain is found at 973-1030 (GLVKHKAFVLAVDQEYIDIVIYEFGLERRISLDLLPLSNCDFNEQKHELYLSWRTNAS). Residues 1084-1113 (YSKARGNDSTSKTAKSSSGNQDISGDGKLH) form a disordered region. Residues 1090–1106 (NDSTSKTAKSSSGNQDI) show a composition bias toward polar residues.

Belongs to the RNR ribonuclease family.

It is found in the cytoplasm. This is an uncharacterized protein from Schizosaccharomyces pombe (strain 972 / ATCC 24843) (Fission yeast).